The sequence spans 255 residues: Taurine import ATP-binding protein TauB (255 aa).

One can recognise an ABC transporter domain in the interval 2–229 (LQISHLYADY…RFVAGESSRS (228 aa)). 34-41 (GPSGCGKT) is a binding site for ATP.

Belongs to the ABC transporter superfamily. Taurine importer (TC 3.A.1.17.1) family. In terms of assembly, the complex is composed of two ATP-binding proteins (TauB), two transmembrane proteins (TauC) and a solute-binding protein (TauA).

The protein resides in the cell inner membrane. The catalysed reaction is taurine(out) + ATP + H2O = taurine(in) + ADP + phosphate + H(+). Its function is as follows. Part of the ABC transporter complex TauABC involved in taurine import. Responsible for energy coupling to the transport system. The polypeptide is Taurine import ATP-binding protein TauB (Escherichia coli O157:H7).